We begin with the raw amino-acid sequence, 147 residues long: Large ribosomal subunit protein uL15 (147 aa).

The interval 1–54 is disordered; the sequence is MKLFELQPAPGSKKLPNRKGRGIGSGNGKTGGRGHKGQNARAGGGVRPGFEGGQ. Gly residues-rich tracts occupy residues 22 to 31 and 42 to 52; these read GIGSGNGKTG and AGGGVRPGFEG.

It belongs to the universal ribosomal protein uL15 family. As to quaternary structure, part of the 50S ribosomal subunit.

Its function is as follows. Binds to the 23S rRNA. This Ruminiclostridium cellulolyticum (strain ATCC 35319 / DSM 5812 / JCM 6584 / H10) (Clostridium cellulolyticum) protein is Large ribosomal subunit protein uL15.